Reading from the N-terminus, the 491-residue chain is Probable glycine dehydrogenase (decarboxylating) subunit 2 (491 aa).

Lysine 273 is subject to N6-(pyridoxal phosphate)lysine.

Belongs to the GcvP family. C-terminal subunit subfamily. The glycine cleavage system is composed of four proteins: P, T, L and H. In this organism, the P 'protein' is a heterodimer of two subunits. Pyridoxal 5'-phosphate is required as a cofactor.

The enzyme catalyses N(6)-[(R)-lipoyl]-L-lysyl-[glycine-cleavage complex H protein] + glycine + H(+) = N(6)-[(R)-S(8)-aminomethyldihydrolipoyl]-L-lysyl-[glycine-cleavage complex H protein] + CO2. The glycine cleavage system catalyzes the degradation of glycine. The P protein binds the alpha-amino group of glycine through its pyridoxal phosphate cofactor; CO(2) is released and the remaining methylamine moiety is then transferred to the lipoamide cofactor of the H protein. The sequence is that of Probable glycine dehydrogenase (decarboxylating) subunit 2 from Bacillus thuringiensis (strain Al Hakam).